The chain runs to 212 residues: Transmembrane protein 65 (212 aa).

Topologically, residues 1 to 88 (MIRSVLLRAL…SRLTAAQLRY (88 aa)) are cytoplasmic. The chain crosses the membrane as a helical span at residues 89–109 (ILLHNAIPFIGFGFLDNAIMI). The Extracellular portion of the chain corresponds to 110–116 (AAGTQIE). A helical membrane pass occupies residues 117 to 137 (LSIGLTLGISTMAAAALGNLV). Over 138–139 (SD) the chain is Cytoplasmic. Residues 140–160 (LAGLGLAGYVEALAVRLGMQI) traverse the membrane as a helical segment. The Extracellular segment spans residues 161–178 (PDLSPRQVDMWQTRVSSH). A helical transmembrane segment spans residues 179–199 (MGKAIGVAIGCILGMFPLLFL). Topologically, residues 200–212 (SDEEDKKPKKDSN) are cytoplasmic.

In terms of assembly, monomer. Homodimer. Interacts with GJA1. In terms of tissue distribution, expression is restricted to the heart (at protein level).

Its subcellular location is the cell membrane. It is found in the mitochondrion inner membrane. Functionally, essential for maintaining proper cardiac intercalated disk (ICD) structure and function. May regulate cardiac conduction and the function of the gap junction protein GJA1. May contribute to the stability and proper localization of GJA1 to cardiac intercalated disk thereby regulating gap junction communication. Regulates mitochondrial respiration and mitochondrial DNA copy number maintenance. The chain is Transmembrane protein 65 (tmem65) from Danio rerio (Zebrafish).